A 209-amino-acid chain; its full sequence is Tumor suppressor candidate gene 1 protein (209 aa).

Disordered stretches follow at residues 1–55 (MWRM…DGAR), 111–157 (ALRL…LRAR), and 172–209 (LHLE…GPWL). Residues 14–47 (CCGGDGAADGRGPGRSGRARGGGSPSGGGGGVGW) are compositionally biased toward gly residues. A coiled-coil region spans residues 70 to 114 (LEAIRARDEWDRQNARLRQENARLRLENRRLKRENRSLFRQALRL). Residues 125–149 (EARRVPEEASTNRRARDSGREDEPG) are compositionally biased toward basic and acidic residues. Ser-150 carries the post-translational modification Phosphoserine. Positions 152–177 (RALRARLEKLEAMYRRALLQLHLEQR) form a coiled coil. Over residues 174–188 (LEQRGPRPSGDKEEQ) the composition is skewed to basic and acidic residues.

Widely expressed at low level. Expressed at higher level in testis, weakly expressed in muscle, colon, lung and spleen. Not detected in 3 non small cell lung carcinoma (NSCLC) cell lines with homozygous deletion of the 9p region, while it is down-regulated in 3 other tumor cell lines.

This Homo sapiens (Human) protein is Tumor suppressor candidate gene 1 protein (TUSC1).